The primary structure comprises 168 residues: Transcriptional regulator MraZ (168 aa).

SpoVT-AbrB domains are found at residues Glu-8–Arg-51 and Ala-90–Ile-140.

This sequence belongs to the MraZ family. Forms oligomers.

It localises to the cytoplasm. Its subcellular location is the nucleoid. This chain is Transcriptional regulator MraZ, found in Cereibacter sphaeroides (strain KD131 / KCTC 12085) (Rhodobacter sphaeroides).